Consider the following 655-residue polypeptide: uncharacterized protein (655 aa).

A signal peptide spans 1–23; sequence MKRTIKYLSFLGLIPFLSITTIS. Cys-24 carries the N-palmitoyl cysteine lipid modification. The S-diacylglycerol cysteine moiety is linked to residue Cys-24.

The protein belongs to the MG067/MG068/MG395 family.

The protein resides in the cell membrane. This is an uncharacterized protein from Mycoplasma capricolum subsp. capricolum (strain California kid / ATCC 27343 / NCTC 10154).